The primary structure comprises 132 residues: Small ribosomal subunit protein uS8 (132 aa).

This sequence belongs to the universal ribosomal protein uS8 family. Part of the 30S ribosomal subunit. Contacts proteins S5 and S12.

One of the primary rRNA binding proteins, it binds directly to 16S rRNA central domain where it helps coordinate assembly of the platform of the 30S subunit. The polypeptide is Small ribosomal subunit protein uS8 (Streptomyces coelicolor (strain ATCC BAA-471 / A3(2) / M145)).